A 465-amino-acid polypeptide reads, in one-letter code: Chromosomal replication initiator protein DnaA (465 aa).

The segment at 1 to 87 (MLWTDCLTRL…RPGSILSSSE (87 aa)) is domain I, interacts with DnaA modulators. A disordered region spans residues 81 to 123 (SILSSSEQPATTTAALQTAPIPQPAKVKREPEPVANTAVSSKS). Positions 88 to 100 (QPATTTAALQTAP) are enriched in low complexity. The domain II stretch occupies residues 88 to 127 (QPATTTAALQTAPIPQPAKVKREPEPVANTAVSSKSSKKK). The domain III, AAA+ region stretch occupies residues 128–345 (LLNPQFTFSL…GALNKVVAIS (218 aa)). The ATP site is built by Gly-173, Gly-175, Lys-176, and Thr-177. The segment at 346-465 (RFKGAPIDLD…YKNLLRLLQS (120 aa)) is domain IV, binds dsDNA.

This sequence belongs to the DnaA family. As to quaternary structure, oligomerizes as a right-handed, spiral filament on DNA at oriC.

Its subcellular location is the cytoplasm. In terms of biological role, plays an essential role in the initiation and regulation of chromosomal replication. ATP-DnaA binds to the origin of replication (oriC) to initiate formation of the DNA replication initiation complex once per cell cycle. Binds the DnaA box (a 9 base pair repeat at the origin) and separates the double-stranded (ds)DNA. Forms a right-handed helical filament on oriC DNA; dsDNA binds to the exterior of the filament while single-stranded (ss)DNA is stabiized in the filament's interior. The ATP-DnaA-oriC complex binds and stabilizes one strand of the AT-rich DNA unwinding element (DUE), permitting loading of DNA polymerase. After initiation quickly degrades to an ADP-DnaA complex that is not apt for DNA replication. Binds acidic phospholipids. The sequence is that of Chromosomal replication initiator protein DnaA from Acinetobacter baumannii (strain ATCC 17978 / DSM 105126 / CIP 53.77 / LMG 1025 / NCDC KC755 / 5377).